The primary structure comprises 229 residues: PKHD-type hydroxylase RPA3479 (229 aa).

A Fe2OG dioxygenase domain is found at 78 to 180 (QIFPPLFNRY…RVASFFWLQS (103 aa)). Positions 98, 100, and 161 each coordinate Fe cation. Position 171 (arginine 171) interacts with 2-oxoglutarate.

Requires Fe(2+) as cofactor. It depends on L-ascorbate as a cofactor.

This chain is PKHD-type hydroxylase RPA3479, found in Rhodopseudomonas palustris (strain ATCC BAA-98 / CGA009).